Here is a 331-residue protein sequence, read N- to C-terminus: MLTLAKIALISSLFISLPFARPQKQNPRRNVTQHTIEDVKIMRNNSIHLERSINVTSENGSDISNLMVTTPSPLNLSTTFRTTNSTRTWLMTSSSESSRPSSTYSVPPLVQGFVSKLPLNSSTADANPLQVSEHSNSTNSPSPENFTWSLDNDTMNSPEDISTTVRPFPPPPKTTPVTPFTAEPTEWLPTNNDNFAGFTPYQEKTTLQPTLKFTNNSKLFPNTSDTPKENKNTGIVFGAILGAILGASLLSLVGYLLCGQRKTDSFSHRRLYDDRNEPVLRLDNAPEPYDVNFGNSSYYNPAVSDSSMPEGGESLQDGIPMDAIPPLRPSI.

The signal sequence occupies residues 1-22 (MLTLAKIALISSLFISLPFARP). At 23–233 (QKQNPRRNVT…SDTPKENKNT (211 aa)) the chain is on the extracellular side. Asn-30, Asn-44, Asn-54, Asn-59, Asn-75, Asn-84, Asn-120, Asn-136, Asn-145, Asn-152, Asn-215, and Asn-222 each carry an N-linked (GlcNAc...) asparagine glycan. Over residues 124–162 (ADANPLQVSEHSNSTNSPSPENFTWSLDNDTMNSPEDIS) the composition is skewed to polar residues. The interval 124–186 (ADANPLQVSE…VTPFTAEPTE (63 aa)) is disordered. The helical transmembrane segment at 234–254 (GIVFGAILGAILGASLLSLVG) threads the bilayer. The Cytoplasmic segment spans residues 255 to 331 (YLLCGQRKTD…DAIPPLRPSI (77 aa)). The tract at residues 302–331 (AVSDSSMPEGGESLQDGIPMDAIPPLRPSI) is disordered.

In terms of processing, highly glycosylated (N- and O-linked carbohydrates).

Its subcellular location is the membrane. This Mus musculus (Mouse) protein is Mucin-15 (Muc15).